A 415-amino-acid chain; its full sequence is Multidrug resistance protein MdtA (415 aa).

A signal peptide spans 1-21; that stretch reads MKGSYKSRWVIVIVVVIAAIA. The segment covering 31 to 47 has biased composition (polar residues); sequence DSQSAAPGATKQAQQSP. Disordered stretches follow at residues 31-60 and 392-415; these read DSQSAAPGATKQAQQSPAGGRRGMRSGPLA and EAQSATTPEEKATSREYAKKGARS. Over residues 399–415 the composition is skewed to basic and acidic residues; it reads PEEKATSREYAKKGARS.

The protein belongs to the membrane fusion protein (MFP) (TC 8.A.1) family. Part of a tripartite efflux system composed of MdtA, MdtB and MdtC.

Its subcellular location is the cell inner membrane. Functionally, the MdtABC tripartite complex confers resistance against novobiocin and deoxycholate. This is Multidrug resistance protein MdtA from Escherichia coli O8 (strain IAI1).